Reading from the N-terminus, the 351-residue chain is Probable dual-specificity RNA methyltransferase RlmN (351 aa).

Residue Glu-97 is the Proton acceptor of the active site. One can recognise a Radical SAM core domain in the interval 103 to 337 (YDYGNTVCIS…VTVRKERGVD (235 aa)). An intrachain disulfide couples Cys-110 to Cys-342. Residues Cys-117, Cys-121, and Cys-124 each coordinate [4Fe-4S] cluster. S-adenosyl-L-methionine is bound by residues 166–167 (GE), Ser-198, 221–223 (SLH), and Asn-299. Residue Cys-342 is the S-methylcysteine intermediate of the active site.

This sequence belongs to the radical SAM superfamily. RlmN family. The cofactor is [4Fe-4S] cluster.

It is found in the cytoplasm. It catalyses the reaction adenosine(2503) in 23S rRNA + 2 reduced [2Fe-2S]-[ferredoxin] + 2 S-adenosyl-L-methionine = 2-methyladenosine(2503) in 23S rRNA + 5'-deoxyadenosine + L-methionine + 2 oxidized [2Fe-2S]-[ferredoxin] + S-adenosyl-L-homocysteine. The catalysed reaction is adenosine(37) in tRNA + 2 reduced [2Fe-2S]-[ferredoxin] + 2 S-adenosyl-L-methionine = 2-methyladenosine(37) in tRNA + 5'-deoxyadenosine + L-methionine + 2 oxidized [2Fe-2S]-[ferredoxin] + S-adenosyl-L-homocysteine. Specifically methylates position 2 of adenine 2503 in 23S rRNA and position 2 of adenine 37 in tRNAs. The chain is Probable dual-specificity RNA methyltransferase RlmN from Natranaerobius thermophilus (strain ATCC BAA-1301 / DSM 18059 / JW/NM-WN-LF).